A 420-amino-acid chain; its full sequence is Glucose-1-phosphate adenylyltransferase (420 aa).

Alpha-D-glucose 1-phosphate contacts are provided by residues tyrosine 107, glycine 173, 188-189, and serine 206; that span reads EK.

It belongs to the bacterial/plant glucose-1-phosphate adenylyltransferase family. In terms of assembly, homotetramer.

The catalysed reaction is alpha-D-glucose 1-phosphate + ATP + H(+) = ADP-alpha-D-glucose + diphosphate. It functions in the pathway glycan biosynthesis; glycogen biosynthesis. Functionally, involved in the biosynthesis of ADP-glucose, a building block required for the elongation reactions to produce glycogen. Catalyzes the reaction between ATP and alpha-D-glucose 1-phosphate (G1P) to produce pyrophosphate and ADP-Glc. This Shewanella sp. (strain ANA-3) protein is Glucose-1-phosphate adenylyltransferase.